The following is a 599-amino-acid chain: QHYPLGDMDGEDPMGELEIPSKSFYRQNGEPYTGKVKASVTFLDPRNISTATAAQSDLNFINDEGDTFPLRTYGMFSVDFTDEAASESLNVGKVKVHLDSTQVKMPEHVPMMKLWSLNPDTGLWEEEGDFRFESQRRKRREDRTFLVGNMEIRERRLFNLDVPESRRCFIKVRAYRSERFLPSEQIQGVVVSVINLEPRAGFSSNPRAWGRFDSVLTGPNGACLPAFCDDQSPDAYSAYVLASLAGEELEAVESSPKFNPNAIGVPQPYLNKLKYRRTDHEDPRVKKTAFQISMAKPRPNSAEESNGPIYAFENLQACEEAPPSAAHFRFYQIEGDRYDYNTVPFNEDDPMSWTEDYLAWWPKPMEFRACYIKVKIVGPLEVNVRSRNMGGTHRQTVGKLYGIRDVKSTRDRDQPNVSSACLEFKCSGMLYDQDRVDRTLVKVIPQGSCHRASVNSMLHEYLVNHLPLAVNNDTSEYTMLAPLDPLGHNYGIYTVTDQDPRTAKEIALGRCFDGSSDGSSRVMKSNVGVALTFNCVERQVGRQSAFQYLQSTSARPSPASTVRGRAPSRRQRASSGSQRQPRGVASLRFPGVAQQPLSN.

N-linked (GlcNAc...) asparagine glycans are attached at residues N47, N416, and N472. Residues 550–560 (QSTSARPSPAS) are compositionally biased toward polar residues. The disordered stretch occupies residues 550-599 (QSTSARPSPASTVRGRAPSRRQRASSGSQRQPRGVASLRFPGVAQQPLSN). Over residues 573-583 (ASSGSQRQPRG) the composition is skewed to low complexity.

As to quaternary structure, monomer. Interacts with TGFB1. In terms of processing, cleaved into 2 chains possibly by a furin-like protease upon or preceding secretion. Specifically expressed in cartilage. Expressed at lower level in young cartilage than in adult cartilage. In adult cartilage, it is highly expressed throughout middeep zones.

The protein resides in the secreted. Its subcellular location is the extracellular space. The protein localises to the extracellular matrix. Functionally, probably plays a role in cartilage scaffolding. May act by antagonizing TGF-beta1 (TGFB1) and IGF1 functions. Has the ability to suppress IGF1-induced proliferation and sulfated proteoglycan synthesis, and inhibits ligand-induced IGF1R autophosphorylation. May inhibit TGFB1-mediated induction of cartilage matrix genes via its interaction with TGFB1. Overexpression may lead to impair chondrocyte growth and matrix repair and indirectly promote inorganic pyrophosphate (PPi) supersaturation in aging and osteoarthritis cartilage. The chain is Cartilage intermediate layer protein 1 (CILP) from Sus scrofa (Pig).